The primary structure comprises 91 residues: Acylphosphatase (91 aa).

Residues 3–90 (RVLIRVKGKV…EIYLDFSITQ (88 aa)) form the Acylphosphatase-like domain. Active-site residues include Arg18 and Asn36.

It belongs to the acylphosphatase family.

The catalysed reaction is an acyl phosphate + H2O = a carboxylate + phosphate + H(+). The protein is Acylphosphatase (acyP) of Shewanella amazonensis (strain ATCC BAA-1098 / SB2B).